A 387-amino-acid polypeptide reads, in one-letter code: Acetylornithine deacetylase (387 aa).

Position 80 (His-80) interacts with Zn(2+). Asp-82 is an active-site residue. Asp-112 contacts Zn(2+). Glu-144 is a catalytic residue. Residues Glu-145, Glu-169, and His-355 each contribute to the Zn(2+) site.

Belongs to the peptidase M20A family. ArgE subfamily. In terms of assembly, homodimer. It depends on Zn(2+) as a cofactor. The cofactor is Co(2+). Requires glutathione as cofactor.

The protein resides in the cytoplasm. The catalysed reaction is N(2)-acetyl-L-ornithine + H2O = L-ornithine + acetate. It functions in the pathway amino-acid biosynthesis; L-arginine biosynthesis; L-ornithine from N(2)-acetyl-L-ornithine (linear): step 1/1. Its function is as follows. Catalyzes the hydrolysis of the amide bond of N(2)-acetylated L-amino acids. Cleaves the acetyl group from N-acetyl-L-ornithine to form L-ornithine, an intermediate in L-arginine biosynthesis pathway, and a branchpoint in the synthesis of polyamines. The sequence is that of Acetylornithine deacetylase from Proteus mirabilis (strain HI4320).